The following is a 312-amino-acid chain: Ribosomal RNA small subunit methyltransferase H (312 aa).

S-adenosyl-L-methionine contacts are provided by residues 35 to 37 (GGH), aspartate 55, phenylalanine 79, aspartate 101, and glutamine 108.

This sequence belongs to the methyltransferase superfamily. RsmH family.

It is found in the cytoplasm. It catalyses the reaction cytidine(1402) in 16S rRNA + S-adenosyl-L-methionine = N(4)-methylcytidine(1402) in 16S rRNA + S-adenosyl-L-homocysteine + H(+). In terms of biological role, specifically methylates the N4 position of cytidine in position 1402 (C1402) of 16S rRNA. This chain is Ribosomal RNA small subunit methyltransferase H, found in Buchnera aphidicola subsp. Acyrthosiphon pisum (strain APS) (Acyrthosiphon pisum symbiotic bacterium).